The following is a 275-amino-acid chain: HUWE1-associated protein modifying stress responses 1 (275 aa).

Over residues 32 to 44 (AEQDEQLPPELQE) the composition is skewed to acidic residues. The disordered stretch occupies residues 32-51 (AEQDEQLPPELQEEAAAAAQ). Residues 80–152 (QQPGLSLWVP…LISFLCGKVP (73 aa)) form an HUWE1-binding and HAPSTR1 oligomerization (HBO) domain region. Disordered stretches follow at residues 155 to 181 (RNSR…SSVE), 204 to 227 (SVRS…RRRN), and 250 to 275 (GTRK…NRMI). Phosphoserine is present on S167. Over residues 172–181 (TSTETSSSVE) the composition is skewed to low complexity. Residues 204–216 (SVRSSTPGSPTHV) show a composition bias toward polar residues. Phosphoserine is present on S212.

This sequence belongs to the HAPSTR1 family. Homooligomer. Heterooligomer with HAPSTR2; the interaction is direct and stabilizes HAPSTR1. Interacts with HUWE1. Ubiquitinated by HUWE1. Promotes HAPSTR1 degradation through polyubiquitination.

It localises to the nucleus. The protein localises to the cytoplasm. Its function is as follows. Acts as a central player within a network of stress response pathways promoting cellular adaptability. The E3 ligase HUWE1 assists HAPSTR1 in controlling stress signaling and in turn, HUWE1 feeds back to promote the degradation of HAPSTR1. HAPSTR1 represents a central coordination mechanism for stress response programs. Functions as a negative regulator of TP53/P53 in the cellular response to telomere erosion and probably also DNA damage. May attenuate p53/TP53 activation through the E3 ubiquitin ligase HUWE1. The polypeptide is HUWE1-associated protein modifying stress responses 1 (Homo sapiens (Human)).